A 225-amino-acid polypeptide reads, in one-letter code: Cytidylate kinase (225 aa).

Residue 11–19 (GPAAAGKST) participates in ATP binding.

It belongs to the cytidylate kinase family. Type 1 subfamily.

The protein resides in the cytoplasm. It catalyses the reaction CMP + ATP = CDP + ADP. The catalysed reaction is dCMP + ATP = dCDP + ADP. In Bacillus pumilus (strain SAFR-032), this protein is Cytidylate kinase.